The following is a 176-amino-acid chain: MFFKTSNPAALLAWDQFMADCLKLREEARHLDKVLGCGCRSVFSTSIGGRYFHGVNFPGNERPFSRELWTVQRPASGNSCRPRTSRIPAHLREQARELAKIWQENIPVTYARTDALLPALGLDFSATIFGPLQWFRVGDVIYVMTGMTPAQGRMTEILSDEFIRAQKQAEVNNGKQ.

It is found in the host cytoplasm. This is an uncharacterized protein from Escherichia phage Mu (Bacteriophage Mu).